We begin with the raw amino-acid sequence, 62 residues long: Teretoxin Tsu1.1 (62 aa).

Positions 1–21 (MSCFPVLFVMMLLASQSVWAF) are cleaved as a signal peptide. The propeptide occupies 22–40 (PEPETRIGTARDAESMGVR).

This sequence belongs to the teretoxin A (TA) superfamily. In terms of processing, contains 2 disulfide bonds. In terms of tissue distribution, expressed by the venom duct.

It localises to the secreted. The sequence is that of Teretoxin Tsu1.1 from Terebra subulata (Chocolate spotted auger).